Here is a 337-residue protein sequence, read N- to C-terminus: Putative transcription activator protein HfaB (337 aa).

Polar residues predominate over residues 303–313 (AYNNLGTNNAQ). A disordered region spans residues 303-337 (AYNNLGTNNAQTRDDPSRWNARRDPDIRDAKRGRY). The span at 314–337 (TRDDPSRWNARRDPDIRDAKRGRY) shows a compositional bias: basic and acidic residues.

Required for the attachment of the holdfast to the cell. May be involved in the positive regulation of hfaC. This is Putative transcription activator protein HfaB (hfaB) from Caulobacter vibrioides (strain ATCC 19089 / CIP 103742 / CB 15) (Caulobacter crescentus).